The chain runs to 247 residues: MEEQPQMQDADEPADSGGEGRAGGPPQVAGAQAACSEDRMTLLLRLRAQTKQQLLEYKSMVDASEEKTPEQIMQEKQIEAKIEDLENEIEEVKVAFEIKKLALDRMRLSTALKKNLEKISRQSSVLMDNMKHLLELNKLIMKSQQESWDLEEKLLDIRKKRLQLKQASESKLLEIQTEKNKQKIDLDSMENSERIKIIRQNLQMEIKITTVIQHVFQNLILGSKVNWAEDPALKEIVLQLEKNVDMM.

At Met1 the chain carries N-acetylmethionine. Positions 1–14 (MEEQPQMQDADEPA) are enriched in acidic residues. The disordered stretch occupies residues 1 to 34 (MEEQPQMQDADEPADSGGEGRAGGPPQVAGAQAA). Position 16 is a phosphoserine (Ser16). Residues 24–34 (GPPQVAGAQAA) show a composition bias toward low complexity. Positions 47 to 192 (RAQTKQQLLE…KIDLDSMENS (146 aa)) form a coiled coil. A Glycyl lysine isopeptide (Lys-Gly) (interchain with G-Cter in SUMO2) cross-link involves residue Lys67. Residue Thr68 is modified to Phosphothreonine.

This sequence belongs to the CENP-H/MCM16 family. Self-associates. Component of the CENPA-NAC complex, at least composed of CENPA, CENPC, CENPH, CENPM, CENPN, CENPT and CENPU. The CENPA-NAC complex interacts with the CENPA-CAD complex, composed of CENPI, CENPK, CENPL, CENPO, CENPP, CENPQ, CENPR and CENPS. Interacts directly with CENPK. Interacts with KIF2C and NDC80. Interacts with TRIM36.

It localises to the nucleus. Its subcellular location is the chromosome. The protein resides in the centromere. The protein localises to the kinetochore. Component of the CENPA-NAC (nucleosome-associated) complex, a complex that plays a central role in assembly of kinetochore proteins, mitotic progression and chromosome segregation. The CENPA-NAC complex recruits the CENPA-CAD (nucleosome distal) complex and may be involved in incorporation of newly synthesized CENPA into centromeres. Required for chromosome congression and efficiently align the chromosomes on a metaphase plate. This is Centromere protein H from Homo sapiens (Human).